The primary structure comprises 1005 residues: Isoleucine--tRNA ligase (1005 aa).

The short motif at 70–80 (PYANGNIHIGH) is the 'HIGH' region element. Position 629 (glutamate 629) interacts with L-isoleucyl-5'-AMP. Positions 670-674 (KMSKS) match the 'KMSKS' region motif. Lysine 673 provides a ligand contact to ATP.

This sequence belongs to the class-I aminoacyl-tRNA synthetase family. IleS type 1 subfamily. As to quaternary structure, monomer.

It localises to the cytoplasm. It carries out the reaction tRNA(Ile) + L-isoleucine + ATP = L-isoleucyl-tRNA(Ile) + AMP + diphosphate. In terms of biological role, catalyzes the attachment of isoleucine to tRNA(Ile). As IleRS can inadvertently accommodate and process structurally similar amino acids such as valine, to avoid such errors it has two additional distinct tRNA(Ile)-dependent editing activities. One activity is designated as 'pretransfer' editing and involves the hydrolysis of activated Val-AMP. The other activity is designated 'posttransfer' editing and involves deacylation of mischarged Val-tRNA(Ile). The sequence is that of Isoleucine--tRNA ligase from Rhodopseudomonas palustris (strain ATCC BAA-98 / CGA009).